The chain runs to 459 residues: Glycosyl hydrolase family 109 protein 1 (459 aa).

The segment at residues 1-31 is a signal peptide (tat-type signal); sequence MHNIHRRHFLKAAGAVTAGLVTANIALNANA. Residues 64–65, aspartate 86, 135–138, 155–156, and asparagine 184 each bind NAD(+); these read ER, WEWH, and EV. Substrate is bound by residues tyrosine 213, arginine 232, 244–247, and tyrosine 326; that span reads YPTH. Residue tyrosine 244 coordinates NAD(+).

Belongs to the Gfo/Idh/MocA family. Glycosyl hydrolase 109 subfamily. Requires NAD(+) as cofactor. Predicted to be exported by the Tat system. The position of the signal peptide cleavage has not been experimentally proven.

Its function is as follows. Glycosidase. The polypeptide is Glycosyl hydrolase family 109 protein 1 (Shewanella sp. (strain MR-7)).